A 66-amino-acid chain; its full sequence is Large ribosomal subunit protein bL35 (66 aa).

Basic residues-rich tracts occupy residues 1 to 15 (MPKLKTKSGAKKRFK) and 24 to 40 (HAQRGKRHGMIKRTKKQ). The disordered stretch occupies residues 1–40 (MPKLKTKSGAKKRFKVTGTGKVMHAQRGKRHGMIKRTKKQ).

The protein belongs to the bacterial ribosomal protein bL35 family.

In Bradyrhizobium sp. (strain ORS 278), this protein is Large ribosomal subunit protein bL35.